Reading from the N-terminus, the 373-residue chain is 8-amino-7-oxononanoate synthase (373 aa).

Residue arginine 16 participates in substrate binding. Pyridoxal 5'-phosphate is bound at residue 93–94; it reads GF. Histidine 118 lines the substrate pocket. Residues serine 165, 190–193, and 222–225 contribute to the pyridoxal 5'-phosphate site; these read DEAH and TFSK. Lysine 225 carries the N6-(pyridoxal phosphate)lysine modification. A substrate-binding site is contributed by threonine 334.

The protein belongs to the class-II pyridoxal-phosphate-dependent aminotransferase family. BioF subfamily. Homodimer. It depends on pyridoxal 5'-phosphate as a cofactor.

The catalysed reaction is 6-carboxyhexanoyl-[ACP] + L-alanine + H(+) = (8S)-8-amino-7-oxononanoate + holo-[ACP] + CO2. It participates in cofactor biosynthesis; biotin biosynthesis. Catalyzes the decarboxylative condensation of pimeloyl-[acyl-carrier protein] and L-alanine to produce 8-amino-7-oxononanoate (AON), [acyl-carrier protein], and carbon dioxide. In Helicobacter pylori (strain ATCC 700392 / 26695) (Campylobacter pylori), this protein is 8-amino-7-oxononanoate synthase.